We begin with the raw amino-acid sequence, 237 residues long: MTSRLFALIPCAGTGSRSGAAMPKQYRTVAGRDMLHFSLAAFDACSEFAQTLVVIAPDDAHFDARRFGGLRFAVRRSGGASRQASVLNGLHALAEFGAHDDDWVLVHDAARPGITPALIRTLVGALKDDTVGGIMALPVADTLKRIDANSADGRIARTEARDGLWQAQTPQMFRIGMLRAAILRAQADGHDLTDEASAIEWLGHAPKLVQGSLRNFKVTYPEDFDLAEAILSRPAVS.

The protein belongs to the IspD/TarI cytidylyltransferase family. IspD subfamily.

The enzyme catalyses 2-C-methyl-D-erythritol 4-phosphate + CTP + H(+) = 4-CDP-2-C-methyl-D-erythritol + diphosphate. It participates in isoprenoid biosynthesis; isopentenyl diphosphate biosynthesis via DXP pathway; isopentenyl diphosphate from 1-deoxy-D-xylulose 5-phosphate: step 2/6. Functionally, catalyzes the formation of 4-diphosphocytidyl-2-C-methyl-D-erythritol from CTP and 2-C-methyl-D-erythritol 4-phosphate (MEP). This chain is 2-C-methyl-D-erythritol 4-phosphate cytidylyltransferase, found in Paraburkholderia xenovorans (strain LB400).